Reading from the N-terminus, the 952-residue chain is 2-oxoglutarate dehydrogenase E1 component (952 aa).

Belongs to the alpha-ketoglutarate dehydrogenase family. As to quaternary structure, homodimer. Part of the 2-oxoglutarate dehydrogenase (OGDH) complex composed of E1 (2-oxoglutarate dehydrogenase), E2 (dihydrolipoamide succinyltransferase) and E3 (dihydrolipoamide dehydrogenase); the complex contains multiple copies of the three enzymatic components (E1, E2 and E3). It depends on thiamine diphosphate as a cofactor.

It catalyses the reaction N(6)-[(R)-lipoyl]-L-lysyl-[protein] + 2-oxoglutarate + H(+) = N(6)-[(R)-S(8)-succinyldihydrolipoyl]-L-lysyl-[protein] + CO2. Functionally, E1 component of the 2-oxoglutarate dehydrogenase (OGDH) complex which catalyzes the decarboxylation of 2-oxoglutarate, the first step in the conversion of 2-oxoglutarate to succinyl-CoA and CO(2). The polypeptide is 2-oxoglutarate dehydrogenase E1 component (Geobacillus sp. (strain WCH70)).